Here is a 652-residue protein sequence, read N- to C-terminus: Acetyl-coenzyme A synthetase (652 aa).

Residues 191-194, Thr-311, and Asn-335 each bind CoA; that span reads RAGR. ATP contacts are provided by residues 387 to 389, 411 to 416, Asp-500, and Arg-515; these read GEP and DTWWQT. Ser-523 is a CoA binding site. Position 526 (Arg-526) interacts with ATP. Mg(2+)-binding residues include Val-537, His-539, and Ile-542. Arg-584 lines the CoA pocket. An N6-acetyllysine modification is found at Lys-609.

The protein belongs to the ATP-dependent AMP-binding enzyme family. The cofactor is Mg(2+). Post-translationally, acetylated. Deacetylation by the SIR2-homolog deacetylase activates the enzyme.

It catalyses the reaction acetate + ATP + CoA = acetyl-CoA + AMP + diphosphate. Its function is as follows. Catalyzes the conversion of acetate into acetyl-CoA (AcCoA), an essential intermediate at the junction of anabolic and catabolic pathways. Acs undergoes a two-step reaction. In the first half reaction, Acs combines acetate with ATP to form acetyl-adenylate (AcAMP) intermediate. In the second half reaction, it can then transfer the acetyl group from AcAMP to the sulfhydryl group of CoA, forming the product AcCoA. Functionally, enables the cell to use acetate during aerobic growth to generate energy via the TCA cycle, and biosynthetic compounds via the glyoxylate shunt. Acetylates CheY, the response regulator involved in flagellar movement and chemotaxis. The protein is Acetyl-coenzyme A synthetase of Salmonella typhi.